The chain runs to 204 residues: Somatotropin (204 aa).

Positions 1-17 (MDRAILLLSVLSVGVSS) are cleaved as a signal peptide. At glutamine 18 the chain carries Pyrrolidone carboxylic acid. Residue histidine 35 participates in Zn(2+) binding. Cysteine 69 and cysteine 177 form a disulfide bridge. Glutamate 186 is a binding site for Zn(2+). Residues cysteine 194 and cysteine 202 are joined by a disulfide bond.

It belongs to the somatotropin/prolactin family.

It is found in the secreted. Its function is as follows. Growth hormone plays an important role in growth control and is involved in the regulation of several anabolic processes. Implicated as an osmoregulatory substance important for seawater adaptation. This chain is Somatotropin (gh), found in Dicentrarchus labrax (European seabass).